The sequence spans 212 residues: Vesicle transport protein SFT2C (212 aa).

Residues 1 to 78 (MADLHRQLQD…TRGQRLVAGG (78 aa)) lie on the Cytoplasmic side of the membrane. Residues 79 to 99 (LCLLLAALCFGLAALYAPVLL) form a helical membrane-spanning segment. Residues 100 to 104 (LRARK) are Lumenal-facing. Residues 105–125 (FALLWSLGSVLAWASAALLRG) form a helical membrane-spanning segment. At 126-142 (GPACGRLLRGEETPSRS) the chain is on the cytoplasmic side. The helical transmembrane segment at 143–165 (TLGYAAALGATLYAALVLRSTVL) threads the bilayer. Residues 166-174 (TALGACAQV) are Lumenal-facing. Residues 175–197 (AALLYALIGLLPWGGVTALRLAL) form a helical membrane-spanning segment. Residues 198-212 (GRLNRGTGLANALPV) lie on the Cytoplasmic side of the membrane.

Belongs to the SFT2 family.

It localises to the membrane. In terms of biological role, may be involved in fusion of retrograde transport vesicles derived from an endocytic compartment with the Golgi complex. The polypeptide is Vesicle transport protein SFT2C (Mus musculus (Mouse)).